Consider the following 245-residue polypeptide: Probable phosphatase CKO_02035 (245 aa).

Zn(2+) is bound by residues histidine 7, histidine 9, histidine 15, histidine 40, glutamate 73, histidine 101, histidine 131, aspartate 192, and histidine 194.

This sequence belongs to the PHP family. In terms of assembly, homotrimer. Zn(2+) serves as cofactor.

In Citrobacter koseri (strain ATCC BAA-895 / CDC 4225-83 / SGSC4696), this protein is Probable phosphatase CKO_02035.